The following is a 591-amino-acid chain: Aspartate--tRNA(Asp/Asn) ligase (591 aa).

Glu175 contributes to the L-aspartate binding site. The interval 199–202 is aspartate; it reads QQFK. Residues Arg221 and His453 each coordinate L-aspartate. 221–223 serves as a coordination point for ATP; it reads RDE. An ATP-binding site is contributed by Glu486. Arg493 contacts L-aspartate. 538-541 contacts ATP; the sequence is GIDR.

This sequence belongs to the class-II aminoacyl-tRNA synthetase family. Type 1 subfamily. In terms of assembly, homodimer.

It is found in the cytoplasm. It catalyses the reaction tRNA(Asx) + L-aspartate + ATP = L-aspartyl-tRNA(Asx) + AMP + diphosphate. Aspartyl-tRNA synthetase with relaxed tRNA specificity since it is able to aspartylate not only its cognate tRNA(Asp) but also tRNA(Asn). Reaction proceeds in two steps: L-aspartate is first activated by ATP to form Asp-AMP and then transferred to the acceptor end of tRNA(Asp/Asn). The polypeptide is Aspartate--tRNA(Asp/Asn) ligase (Cereibacter sphaeroides (strain ATCC 17029 / ATH 2.4.9) (Rhodobacter sphaeroides)).